A 197-amino-acid chain; its full sequence is MTLKELQAAIEGILFVRGDEGVTLEELCDLLELSTDVVYAALEELRLSYTDEARGLRIEEVAHAFRLSTKPELAPYFKKLALSTLQSGLSQAALETLAIIAYRQPITRIEVDEVRGVKSEKAIQTLTSRLLIKEVGRAQGTGRPILYGTTPQFLDHFGLKSLKELPPLPEDIDESSIGEEADLFFQQMEQGSLFHEE.

It belongs to the ScpB family. In terms of assembly, homodimer. Homodimerization may be required to stabilize the binding of ScpA to the Smc head domains. Component of a cohesin-like complex composed of ScpA, ScpB and the Smc homodimer, in which ScpA and ScpB bind to the head domain of Smc. The presence of the three proteins is required for the association of the complex with DNA.

It is found in the cytoplasm. Functionally, participates in chromosomal partition during cell division. May act via the formation of a condensin-like complex containing Smc and ScpA that pull DNA away from mid-cell into both cell halves. This is Segregation and condensation protein B from Halalkalibacterium halodurans (strain ATCC BAA-125 / DSM 18197 / FERM 7344 / JCM 9153 / C-125) (Bacillus halodurans).